The chain runs to 288 residues: Phenazine biosynthesis-like domain-containing protein (288 aa).

Residue Glu-46 is part of the active site.

The protein belongs to the PhzF family. As to quaternary structure, interacts with UNRIP/MAWD.

The polypeptide is Phenazine biosynthesis-like domain-containing protein (PBLD) (Bos taurus (Bovine)).